The following is a 647-amino-acid chain: Threonine--tRNA ligase (647 aa).

Positions 1–61 (MIKITFPDGA…EEDGSIEIVT (61 aa)) constitute a TGS domain. The segment at 240-538 (DHRKLGKELD…LIETYKGAFP (299 aa)) is catalytic. Zn(2+)-binding residues include C334, H385, and H515.

The protein belongs to the class-II aminoacyl-tRNA synthetase family. In terms of assembly, homodimer. The cofactor is Zn(2+).

It localises to the cytoplasm. The catalysed reaction is tRNA(Thr) + L-threonine + ATP = L-threonyl-tRNA(Thr) + AMP + diphosphate + H(+). Its function is as follows. Catalyzes the attachment of threonine to tRNA(Thr) in a two-step reaction: L-threonine is first activated by ATP to form Thr-AMP and then transferred to the acceptor end of tRNA(Thr). Also edits incorrectly charged L-seryl-tRNA(Thr). This Streptococcus pyogenes serotype M4 (strain MGAS10750) protein is Threonine--tRNA ligase.